The chain runs to 735 residues: Catalase-peroxidase (735 aa).

Composition is skewed to polar residues over residues 1–10 (MENQNRQNAA) and 17–26 (SVTNQSSNRT). Residues 1–30 (MENQNRQNAAQCPFHGSVTNQSSNRTTNKD) form a disordered region. Residues 100–223 (WHSAGTYRIG…LAAVQMGLIY (124 aa)) constitute a cross-link (tryptophyl-tyrosyl-methioninium (Trp-Tyr) (with M-249)). His101 (proton acceptor) is an active-site residue. The tryptophyl-tyrosyl-methioninium (Tyr-Met) (with W-100) cross-link spans 223 to 249 (YVNPEGPDGKPDPKAAARDIRETFRRM). His264 is a binding site for heme b.

Belongs to the peroxidase family. Peroxidase/catalase subfamily. In terms of assembly, homodimer or homotetramer. Requires heme b as cofactor. In terms of processing, formation of the three residue Trp-Tyr-Met cross-link is important for the catalase, but not the peroxidase activity of the enzyme.

The catalysed reaction is H2O2 + AH2 = A + 2 H2O. The enzyme catalyses 2 H2O2 = O2 + 2 H2O. In terms of biological role, bifunctional enzyme with both catalase and broad-spectrum peroxidase activity. Also displays NADH oxidase, INH lyase and isonicotinoyl-NAD synthase activities. The polypeptide is Catalase-peroxidase (Geobacillus stearothermophilus (Bacillus stearothermophilus)).